We begin with the raw amino-acid sequence, 733 residues long: Wall-associated receptor kinase 5 (733 aa).

Residues 1 to 23 form the signal peptide; it reads MKVHSLFLMAIFFYLAYTQLVKA. Residues 24–330 lie on the Extracellular side of the membrane; the sequence is QPRDDCQTRC…IDTPKEEPKY (307 aa). N-linked (GlcNAc...) asparagine glycosylation is found at N57, N77, N110, N137, N184, N206, N218, N232, and N247. Residues 231–278 form the EGF-like 1 domain; sequence GNQTCEQVVGRNICGGNSTCFDSTRGKGYNCKCLQGFDGNPYLSDGCQ. Disulfide bonds link C235–C250, C244–C261, C263–C277, C283–C296, C290–C305, and C307–C320. Positions 279 to 321 constitute an EGF-like 2; calcium-binding domain; the sequence is DINECTTRIHNCSDTSTCENTLGSFHCQCPSGSDLNTTTMSCI. N289 carries N-linked (GlcNAc...) asparagine glycosylation. N314 carries N-linked (GlcNAc...) asparagine glycosylation. A helical transmembrane segment spans residues 331 to 351; sequence LGWTTVLLGTTIGFLIILLTI. The Cytoplasmic portion of the chain corresponds to 352–733; that stretch reads SYIQQKMRHR…VTRLDIETGR (382 aa). T397 carries the post-translational modification Phosphothreonine. The region spanning 408-691 is the Protein kinase domain; the sequence is YNESRILGQG…RVKTTKHQWS (284 aa). Residues 414–422 and K436 contribute to the ATP site; that span reads LGQGGQGTV. A Phosphotyrosine modification is found at Y481. D533 acts as the Proton acceptor in catalysis. A phosphothreonine mark is found at T567 and T572. The residue at position 580 (Y580) is a Phosphotyrosine.

Belongs to the protein kinase superfamily. Ser/Thr protein kinase family. In terms of tissue distribution, predominantly expressed in green tissues such as stems and leaves.

It is found in the membrane. The catalysed reaction is L-seryl-[protein] + ATP = O-phospho-L-seryl-[protein] + ADP + H(+). The enzyme catalyses L-threonyl-[protein] + ATP = O-phospho-L-threonyl-[protein] + ADP + H(+). In terms of biological role, serine/threonine-protein kinase that may function as a signaling receptor of extracellular matrix component. Binding to pectin may have significance in the control of cell expansion, morphogenesis and development. This is Wall-associated receptor kinase 5 (WAK5) from Arabidopsis thaliana (Mouse-ear cress).